A 292-amino-acid chain; its full sequence is General transcription factor IIE subunit 2 (292 aa).

Residue methionine 1 is modified to N-acetylmethionine. The tract at residues leucine 17–asparagine 64 is disordered. The segment covering glycine 51 to phenylalanine 63 has biased composition (polar residues). Serine 62 bears the Phosphoserine mark. The segment at residues alanine 67 to lysine 147 is a DNA-binding region (TFIIE beta). At lysine 75 the chain carries N6-acetyllysine. The disordered stretch occupies residues serine 245 to histidine 277. Positions glutamine 258 to lysine 272 are enriched in basic residues.

This sequence belongs to the TFIIE beta subunit family. In terms of assembly, tetramer of two alpha and two beta chains. Interacts with FACT subunit SUPT16H. Interacts with ATF7IP. Interacts with SND1. Part of TBP-based Pol II pre-initiation complex (PIC), in which Pol II core assembles with general transcription factors and other specific initiation factors including GTF2E1, GTF2E2, GTF2F1, GTF2F2, TCEA1, ERCC2, ERCC3, GTF2H2, GTF2H3, GTF2H4, GTF2H5, GTF2A1, GTF2A2, GTF2B and TBP; this large multi-subunit PIC complex mediates DNA unwinding and targets Pol II core to the transcription start site where the first phosphodiester bond forms.

It is found in the nucleus. Its function is as follows. Recruits TFIIH to the initiation complex and stimulates the RNA polymerase II C-terminal domain kinase and DNA-dependent ATPase activities of TFIIH. Both TFIIH and TFIIE are required for promoter clearance by RNA polymerase. In Mus musculus (Mouse), this protein is General transcription factor IIE subunit 2 (Gtf2e2).